A 1143-amino-acid polypeptide reads, in one-letter code: DNA-directed RNA polymerase subunit beta (1143 aa).

This sequence belongs to the RNA polymerase beta chain family. In plastids the minimal PEP RNA polymerase catalytic core is composed of four subunits: alpha, beta, beta', and beta''. When a (nuclear-encoded) sigma factor is associated with the core the holoenzyme is formed, which can initiate transcription.

The protein localises to the plastid. The protein resides in the chloroplast. The catalysed reaction is RNA(n) + a ribonucleoside 5'-triphosphate = RNA(n+1) + diphosphate. Its function is as follows. DNA-dependent RNA polymerase catalyzes the transcription of DNA into RNA using the four ribonucleoside triphosphates as substrates. The protein is DNA-directed RNA polymerase subunit beta of Pyropia yezoensis (Susabi-nori).